The chain runs to 302 residues: Transmembrane protein 191C (302 aa).

Disordered regions lie at residues Met1–Arg21 and Leu54–Arg73. Residues Gln5–Thr160 are a coiled coil. Residues Val238–Leu258 form a helical membrane-spanning segment.

This sequence belongs to the TMEM191 family.

Its subcellular location is the membrane. The polypeptide is Transmembrane protein 191C (Homo sapiens (Human)).